Reading from the N-terminus, the 152-residue chain is Natriuretic peptides A (152 aa).

The signal sequence occupies residues 1–24 (MGSFSITKGFFLFLAFWLPGHIGA). 2 propeptides span residues 25–122 (NPVY…AGPR) and 92–102 (DGGALGRGPWD). Positions 54–104 (DEVMPPQALSEQTDEAGAALSSLSEVPPWTGEVNPSQRDGGALGRGPWDPS) are disordered. The residue at position 128 (Ser-128) is a Phosphoserine. A disulfide bond links Cys-129 and Cys-145. The segment at 146 to 150 (NSFRY) is important for degradation of atrial natriuretic peptide by IDE.

This sequence belongs to the natriuretic peptide family. As to quaternary structure, homodimer; disulfide-linked antiparallel dimer. The precursor molecule is proteolytically cleaved by CORIN at Arg-122 to produce the atrial natriuretic peptide. Undergoes further proteolytic cleavage by unknown proteases to give rise to long-acting natriuretic peptide, vessel dilator and kaliuretic peptide. Additional processing gives rise to the auriculin and atriopeptin peptides. In the kidneys, alternative processing by an unknown protease results in the peptide urodilatin. Post-translationally, cleavage by MME initiates degradation of the factor and thereby regulates its activity. Degradation by IDE results in reduced activation of NPR1 (in vitro). During IDE degradation, the resulting products can temporarily stimulate NPR2 to produce cGMP, before the fragments are completely degraded and inactivated by IDE (in vitro). In terms of processing, degraded by IDE. Phosphorylation on Ser-128 decreases vasorelaxant activity. In terms of tissue distribution, high levels of expression in the atria compared to the ventricles. Very low levels of expression detected in extracardiac tissues such as the brain, hypothalamus, pituitary, lung and aorta. Atria (at protein level). As to expression, high levels of expression in the atria with very low levels of expression in the ventricles (at protein level). Relatively low levels of expression detected in the brain compared to the atria (at protein level).

It localises to the secreted. Its subcellular location is the perikaryon. It is found in the cell projection. In terms of biological role, hormone that plays a key role in mediating cardio-renal homeostasis, and is involved in vascular remodeling and regulating energy metabolism. Acts by specifically binding and stimulating NPR1 to produce cGMP, which in turn activates effector proteins, such as PRKG1, that drive various biological responses. Regulates vasodilation, natriuresis, diuresis and aldosterone synthesis and is therefore essential for regulating blood pressure, controlling the extracellular fluid volume and maintaining the fluid-electrolyte balance. Also involved in inhibiting cardiac remodeling and cardiac hypertrophy by inducing cardiomyocyte apoptosis and attenuating the growth of cardiomyocytes and fibroblasts. Plays a role in female pregnancy by promoting trophoblast invasion and spiral artery remodeling in uterus, and thus prevents pregnancy-induced hypertension. In adipose tissue, acts in various cGMP- and PKG-dependent pathways to regulate lipid metabolism and energy homeostasis. This includes up-regulating lipid metabolism and mitochondrial oxygen utilization by activating the AMP-activated protein kinase (AMPK), and increasing energy expenditure by acting via MAPK11 to promote the UCP1-dependent thermogenesis of brown adipose tissue. Binds the clearance receptor NPR3 which removes the hormone from circulation. Its function is as follows. May have a role in cardio-renal homeostasis through regulation of natriuresis, diuresis, vasodilation, and inhibiting aldosterone synthesis. In vitro, promotes the production of cGMP and induces vasodilation. May promote natriuresis, at least in part, by enhancing prostaglandin E2 synthesis resulting in the inhibition of renal Na+-K+-ATPase. However reports on the involvement of this peptide in mammal blood volume and blood pressure homeostasis are conflicting; according to a report, in vivo it is not sufficient to activate cGMP and does not inhibit collecting duct transport nor effect diuresis and natriuresis. Appears to bind to specific receptors that are distinct from the receptors bound by atrial natriuretic peptide and vessel dilator. Possibly enhances protein excretion in urine by decreasing proximal tubular protein reabsorption. Functionally, may have a role in cardio-renal homeostasis through regulation of natriuresis, diuresis, and vasodilation. In vitro, promotes the production of cGMP and induces vasodilation. May promote natriuresis, at least in part, by enhancing prostaglandin E2 synthesis resulting in the inhibition of renal Na+-K+-ATPase. However reports on the involvement of this peptide in mammal blood volume and blood pressure homeostasis are conflicting; according to a report, in vivo it is not sufficient to activate cGMP and does not inhibit collecting duct transport nor effect diuresis and natriuresis. Appears to bind to specific receptors that are distinct from the receptors bound by the atrial natriuretic and long-acting natriuretic peptides. Possibly functions in protein excretion in urine by maintaining the integrity of the proximal tubules and enhancing protein excretion by decreasing proximal tubular protein reabsorption. May have a role in cardio-renal homeostasis through regulation of diuresis and inhibiting aldosterone synthesis. In vitro, promotes the production of cGMP and induces vasodilation. May promote natriuresis, at least in part, by enhancing prostaglandin E2 synthesis resulting in the inhibition of renal Na+-K+-ATPase. May have a role in potassium excretion but not sodium excretion (natriuresis). Possibly enhances protein excretion in urine by decreasing proximal tubular protein reabsorption. In terms of biological role, hormone produced in the kidneys that appears to be important for maintaining cardio-renal homeostasis. Mediates vasodilation, natriuresis and diuresis primarily in the renal system, in order to maintain the extracellular fluid volume and control the fluid-electrolyte balance. Specifically binds and stimulates cGMP production by renal transmembrane receptors, likely NPR1. Urodilatin not ANP, may be the natriuretic peptide responsible for the regulation of sodium and water homeostasis in the kidney. Its function is as follows. May have a role in cardio-renal homeostasis through regulation of natriuresis and vasodilation. In vivo promotes natriuresis and in vitro, vasodilates renal artery strips. Functionally, may have a role in cardio-renal homeostasis through regulation of regulation of natriuresis and vasodilation. In vivo promotes natriuresis. In vitro, vasodilates intestinal smooth muscle but not smooth muscle strips. May have a role in cardio-renal homeostasis through regulation of natriuresis and vasodilation. In vivo promotes natriuresis. In vitro, selectively vasodilates intestinal and vascular smooth muscle strips. In terms of biological role, may have a role in cardio-renal homeostasis through regulation of natriuresis and vasodilation. In vivo promotes natriuresis. In vitro, selectively vasodilates intestinal smooth muscle but not vascular smooth muscle strips. In Rattus norvegicus (Rat), this protein is Natriuretic peptides A (Nppa).